The sequence spans 369 residues: DNA replication and repair protein RecF (369 aa).

30 to 37 (GDNGSGKT) is a binding site for ATP.

Belongs to the RecF family.

It localises to the cytoplasm. The RecF protein is involved in DNA metabolism; it is required for DNA replication and normal SOS inducibility. RecF binds preferentially to single-stranded, linear DNA. It also seems to bind ATP. This chain is DNA replication and repair protein RecF, found in Pseudomonas aeruginosa (strain LESB58).